The primary structure comprises 691 residues: Elongation factor G (691 aa).

Residues Glu-8–Ile-282 form the tr-type G domain. GTP contacts are provided by residues Ala-17–Thr-24, Asp-81–His-85, and Asn-135–Asp-138.

This sequence belongs to the TRAFAC class translation factor GTPase superfamily. Classic translation factor GTPase family. EF-G/EF-2 subfamily.

It is found in the cytoplasm. Catalyzes the GTP-dependent ribosomal translocation step during translation elongation. During this step, the ribosome changes from the pre-translocational (PRE) to the post-translocational (POST) state as the newly formed A-site-bound peptidyl-tRNA and P-site-bound deacylated tRNA move to the P and E sites, respectively. Catalyzes the coordinated movement of the two tRNA molecules, the mRNA and conformational changes in the ribosome. The protein is Elongation factor G of Prochlorococcus marinus subsp. pastoris (strain CCMP1986 / NIES-2087 / MED4).